Here is a 363-residue protein sequence, read N- to C-terminus: DNA repair protein rlp1 (363 aa).

The protein belongs to the RecA family. RAD51 subfamily. In terms of assembly, interacts with rdl1 and sws1.

Its subcellular location is the cytoplasm. The protein resides in the nucleus. Its function is as follows. Required for normal levels of meiotic recombination. Acts in the recombinational pathway of double-strand break (DSB) repair together with rhp51, rhp55 and rad22. Required for the full extent of DNA recombination and cell survival under condition of a replication fork collapse. This is DNA repair protein rlp1 from Schizosaccharomyces pombe (strain 972 / ATCC 24843) (Fission yeast).